A 223-amino-acid polypeptide reads, in one-letter code: Ribose-5-phosphate isomerase A (223 aa).

Residues 28 to 31 (TGTT), 81 to 84 (DSAD), and 94 to 97 (KGGG) contribute to the substrate site. Catalysis depends on Glu-103, which acts as the Proton acceptor. Lys-121 is a binding site for substrate.

The protein belongs to the ribose 5-phosphate isomerase family. In terms of assembly, homodimer.

The enzyme catalyses aldehydo-D-ribose 5-phosphate = D-ribulose 5-phosphate. It participates in carbohydrate degradation; pentose phosphate pathway; D-ribose 5-phosphate from D-ribulose 5-phosphate (non-oxidative stage): step 1/1. In terms of biological role, catalyzes the reversible conversion of ribose-5-phosphate to ribulose 5-phosphate. This chain is Ribose-5-phosphate isomerase A, found in Buchnera aphidicola subsp. Acyrthosiphon pisum (strain 5A).